The following is a 142-amino-acid chain: Hemoglobin subunit alpha (142 aa).

The Globin domain occupies 2–142 (VLSPDDKKHV…VSTVLTSKYR (141 aa)). Ser4 bears the Phosphoserine mark. Residues Lys8 and Lys12 each carry the N6-succinyllysine modification. Lys17 is modified (N6-acetyllysine; alternate). Lys17 is modified (N6-succinyllysine; alternate). Tyr25 is subject to Phosphotyrosine. Ser36 carries the phosphoserine modification. Lys41 bears the N6-succinyllysine mark. Phosphoserine is present on Ser50. Position 59 (His59) interacts with O2. His88 lines the heme b pocket. The residue at position 103 (Ser103) is a Phosphoserine. Phosphothreonine is present on Thr109. 2 positions are modified to phosphoserine: Ser125 and Ser132. Phosphothreonine is present on residues Thr135 and Thr138. Phosphoserine is present on Ser139.

The protein belongs to the globin family. In terms of assembly, heterotetramer of two alpha chains and two beta chains. In terms of tissue distribution, red blood cells.

Involved in oxygen transport from the lung to the various peripheral tissues. Functionally, hemopressin acts as an antagonist peptide of the cannabinoid receptor CNR1. Hemopressin-binding efficiently blocks cannabinoid receptor CNR1 and subsequent signaling. The protein is Hemoglobin subunit alpha (HBA) of Papio anubis (Olive baboon).